The chain runs to 447 residues: ATP-dependent protease ATPase subunit HslU (447 aa).

ATP-binding positions include Ile17 and 59–64; that span reads GVGKTE. The tract at residues 136–160 is disordered; sequence PPARGGFQGEPTAEEKPTEKKESAT. Residues 148 to 159 show a composition bias toward basic and acidic residues; the sequence is AEEKPTEKKESA. Residues Asp260, Glu325, and Arg397 each coordinate ATP.

It belongs to the ClpX chaperone family. HslU subfamily. As to quaternary structure, a double ring-shaped homohexamer of HslV is capped on each side by a ring-shaped HslU homohexamer. The assembly of the HslU/HslV complex is dependent on binding of ATP.

It localises to the cytoplasm. In terms of biological role, ATPase subunit of a proteasome-like degradation complex; this subunit has chaperone activity. The binding of ATP and its subsequent hydrolysis by HslU are essential for unfolding of protein substrates subsequently hydrolyzed by HslV. HslU recognizes the N-terminal part of its protein substrates and unfolds these before they are guided to HslV for hydrolysis. This chain is ATP-dependent protease ATPase subunit HslU, found in Coxiella burnetii (strain RSA 331 / Henzerling II).